The primary structure comprises 843 residues: Tetratricopeptide repeat protein 7B (843 aa).

Residues 97-131 (QESNLVMAKLTYVEGDYKEALNIYARVGLDDLPLT) form a TPR 1 repeat. Phosphoserine occurs at positions 160 and 202. TPR repeat units lie at residues 219–252 (ETGL…VETR), 363–396 (SVVY…AFEE), 397–430 (FHLW…KPDD), 479–514 (TYSL…SPTD), 516–548 (QAAF…QGDD), and 549–582 (ANSL…YPEN). Residues Ser625, Ser629, Ser630, Ser673, Ser677, Ser678, and Ser681 each carry the phosphoserine modification. TPR repeat units lie at residues 696-729 (AQIW…FPMS), 730-763 (HNVL…SPTH), 765-797 (KSMQ…NSTA), and 798-831 (HEVW…EASS).

Component of a phosphatidylinositol 4-kinase (PI4K) complex, composed of PI4KA, EFR3 (EFR3A or EFR3B), TTC7 (TTC7A or TTC7B) and HYCC (HYCC1 or HYCC2). Interacts with PI4KA, interaction is direct. Interacts with EFR3 (EFR3A or EFR3B), interaction is direct. Interacts with HYCC (HYCC1 or HYCC2), interaction is direct. Association with the PI4K complex is strongly reduced by TMEM150A.

Its subcellular location is the cytoplasm. The protein resides in the cytosol. It localises to the cell membrane. In terms of biological role, component of a complex required to localize phosphatidylinositol 4-kinase (PI4K) to the plasma membrane. The complex acts as a regulator of phosphatidylinositol 4-phosphate (PtdIns(4)P) synthesis. In the complex, plays a central role in bridging PI4KA to EFR3B and HYCC1, via direct interactions. The chain is Tetratricopeptide repeat protein 7B from Mus musculus (Mouse).